Reading from the N-terminus, the 101-residue chain is Phosphoribosyl-AMP cyclohydrolase (101 aa).

Asp71 serves as a coordination point for Mg(2+). A Zn(2+)-binding site is contributed by Cys72. Residues Asp73 and Asp75 each contribute to the Mg(2+) site. Cys88 and Cys95 together coordinate Zn(2+).

It belongs to the PRA-CH family. Homodimer. Mg(2+) is required as a cofactor. Zn(2+) serves as cofactor.

The protein localises to the cytoplasm. It catalyses the reaction 1-(5-phospho-beta-D-ribosyl)-5'-AMP + H2O = 1-(5-phospho-beta-D-ribosyl)-5-[(5-phospho-beta-D-ribosylamino)methylideneamino]imidazole-4-carboxamide. It participates in amino-acid biosynthesis; L-histidine biosynthesis; L-histidine from 5-phospho-alpha-D-ribose 1-diphosphate: step 3/9. Catalyzes the hydrolysis of the adenine ring of phosphoribosyl-AMP. This Bacillus cereus (strain ZK / E33L) protein is Phosphoribosyl-AMP cyclohydrolase.